Reading from the N-terminus, the 391-residue chain is Multidrug resistance protein MdtL (391 aa).

Transmembrane regions (helical) follow at residues 4–24, 42–62, 69–89, 93–113, 131–151, 158–178, 203–222, 245–265, 269–289, 293–313, 331–351, and 356–376; these read FLICSFALVLLYPAGIDMYLV, IAFSVYLAGMAAAMLFAGKVA, PVAIPGAALFIIASVFCSLAE, LFLAGRFLQGLGAGCCYVVAF, LLNGITCIIPVLAPVLGHLIM, SLFWAMAMMGIAVLMLSLFIL, FFLSRVVITTLSVSVILTFV, ALTAGVSMTVSFSTPFALGIF, TLMITSQVLFLAAGITLAVSP, VSLFGITLICAGFSVGFGVAM, LGIAQVCGSSLWIWLAAVVGI, and MLIGILIACSIVSLLLIMFVA.

Belongs to the major facilitator superfamily. DHA1 family. MdtL (TC 2.A.1.2.22) subfamily.

It is found in the cell inner membrane. Functionally, confers resistance to chloramphenicol. The protein is Multidrug resistance protein MdtL of Escherichia coli (strain 55989 / EAEC).